Consider the following 234-residue polypeptide: 3,4-dihydroxy-2-butanone 4-phosphate synthase (234 aa).

D-ribulose 5-phosphate contacts are provided by residues 39-40, Asp-44, 152-156, and Glu-176; these read RE and RRGHT. Glu-40 serves as a coordination point for Mg(2+). His-155 is a Mg(2+) binding site.

The protein belongs to the DHBP synthase family. Homodimer. Mg(2+) serves as cofactor. Requires Mn(2+) as cofactor.

It carries out the reaction D-ribulose 5-phosphate = (2S)-2-hydroxy-3-oxobutyl phosphate + formate + H(+). Its pathway is cofactor biosynthesis; riboflavin biosynthesis; 2-hydroxy-3-oxobutyl phosphate from D-ribulose 5-phosphate: step 1/1. Its function is as follows. Catalyzes the conversion of D-ribulose 5-phosphate to formate and 3,4-dihydroxy-2-butanone 4-phosphate. The chain is 3,4-dihydroxy-2-butanone 4-phosphate synthase from Pelobacter propionicus (strain DSM 2379 / NBRC 103807 / OttBd1).